The chain runs to 195 residues: uncharacterized protein (195 aa).

The signal sequence occupies residues Met1–Ala21. Residues Asn62 and Asn109 are each glycosylated (N-linked (GlcNAc...) asparagine). The tract at residues Asp119–His141 is disordered.

The protein localises to the secreted. This is an uncharacterized protein from Arthroderma benhamiae (strain ATCC MYA-4681 / CBS 112371) (Trichophyton mentagrophytes).